The following is a 315-amino-acid chain: Glycine--tRNA ligase alpha subunit (315 aa).

This sequence belongs to the class-II aminoacyl-tRNA synthetase family. As to quaternary structure, tetramer of two alpha and two beta subunits.

It is found in the cytoplasm. It catalyses the reaction tRNA(Gly) + glycine + ATP = glycyl-tRNA(Gly) + AMP + diphosphate. This is Glycine--tRNA ligase alpha subunit from Sorangium cellulosum (strain So ce56) (Polyangium cellulosum (strain So ce56)).